The sequence spans 316 residues: Fe-S cluster assembly protein dre2 (316 aa).

Residues 1–128 form an N-terminal SAM-like domain region; that stretch reads MAPRCLLIGT…KPEQEEPVSI (128 aa). The interval 129–208 is linker; that stretch reads PLKFGKNKAN…EDDLITEADM (80 aa). Positions 141–177 are disordered; sequence SATNGTNGAVNPDGSVPLNLNRKRDQPEPVKPAGVGF. [2Fe-2S] cluster-binding residues include cysteine 218, cysteine 229, cysteine 232, and cysteine 234. A fe-S binding site A region spans residues 218 to 234; sequence CQPKPGKRRRACKDCTC. Positions 279, 282, 290, and 293 each coordinate [4Fe-4S] cluster. 2 consecutive short sequence motifs (cx2C motif) follow at residues 279–282 and 290–293; these read CGNC and CDGC. The tract at residues 279–293 is fe-S binding site B; that stretch reads CGNCALGDAFRCDGC.

It belongs to the anamorsin family. In terms of assembly, monomer. Interacts with TAH18. Interacts with MIA40. [2Fe-2S] cluster serves as cofactor. Requires [4Fe-4S] cluster as cofactor.

Its subcellular location is the cytoplasm. The protein resides in the mitochondrion intermembrane space. Its function is as follows. Component of the cytosolic iron-sulfur (Fe-S) protein assembly (CIA) machinery required for the maturation of extramitochondrial Fe-S proteins. Part of an electron transfer chain functioning in an early step of cytosolic Fe-S biogenesis, facilitating the de novo assembly of a [4Fe-4S] cluster on the scaffold complex CFD1-NBP35. Electrons are transferred to DRE2 from NADPH via the FAD- and FMN-containing protein TAH18. TAH18-DRE2 are also required for the assembly of the diferric tyrosyl radical cofactor of ribonucleotide reductase (RNR), probably by providing electrons for reduction during radical cofactor maturation in the catalytic small subunit RNR2. The chain is Fe-S cluster assembly protein dre2 from Pyrenophora tritici-repentis (strain Pt-1C-BFP) (Wheat tan spot fungus).